Here is a 76-residue protein sequence, read N- to C-terminus: DNA-directed RNA polymerase subunit omega (76 aa).

This sequence belongs to the RNA polymerase subunit omega family. As to quaternary structure, the RNAP catalytic core consists of 2 alpha, 1 beta, 1 beta' and 1 omega subunit. When a sigma factor is associated with the core the holoenzyme is formed, which can initiate transcription.

The enzyme catalyses RNA(n) + a ribonucleoside 5'-triphosphate = RNA(n+1) + diphosphate. Its function is as follows. Promotes RNA polymerase assembly. Latches the N- and C-terminal regions of the beta' subunit thereby facilitating its interaction with the beta and alpha subunits. The chain is DNA-directed RNA polymerase subunit omega from Staphylococcus carnosus (strain TM300).